A 720-amino-acid chain; its full sequence is Calpain-12 (720 aa).

Residues 45 to 341 enclose the Calpain catalytic domain; sequence LFRDPCFPAG…FNTVQICSLS (297 aa). Residues cysteine 105, histidine 259, and asparagine 283 contribute to the active site. Residues 342–541 form a domain III region; it reads PEVLGPSPAG…DDVISADLDA (200 aa). A compositionally biased stretch (acidic residues) spans 393–403; sequence DEEEDDDDEEG. Residues 393-415 form a disordered region; sequence DEEEDDDDEEGPWGGWGAAGARG. Residues 542–720 are domain IV; the sequence is LQAPYKPLEL…KQWSEVATFS (179 aa). The region spanning 621–656 is the EF-hand domain; sequence GHLMSWQATFDKFDEDASGTMNSCELRLALTAAGFH. Residues aspartate 634, aspartate 636, serine 638, threonine 640, and glutamate 645 each coordinate Ca(2+).

The protein belongs to the peptidase C2 family. As to expression, expression localized to the cortex of the hair follicle during the anagen phase of hair cycle.

Calcium-regulated non-lysosomal thiol-protease. The sequence is that of Calpain-12 (Capn12) from Mus musculus (Mouse).